A 250-amino-acid polypeptide reads, in one-letter code: Petrobactin import ATP-binding protein FatE (250 aa).

The ABC transporter domain maps to 2-236 (IKIDNVKKFY…TLLTDIFETR (235 aa)). Position 34 to 41 (34 to 41 (GPNGAGKS)) interacts with ATP.

The protein belongs to the ABC transporter superfamily. The complex is composed of two ATP-binding proteins (FatE), two transmembrane proteins (FatC and FatD) and a solute-binding protein (FpuA).

The protein localises to the cell membrane. The enzyme catalyses a Fe(III)-siderophore(out) + ATP + H2O = a Fe(III)-siderophore(in) + ADP + phosphate + H(+). In terms of biological role, part of an ABC transporter complex involved in ferric-petrobactin uptake. Probably responsible for energy coupling to the transport system. This Bacillus anthracis protein is Petrobactin import ATP-binding protein FatE.